A 101-amino-acid polypeptide reads, in one-letter code: Small ribosomal subunit protein uS14 (101 aa).

The protein belongs to the universal ribosomal protein uS14 family. As to quaternary structure, part of the 30S ribosomal subunit. Contacts proteins S3 and S10.

Its function is as follows. Binds 16S rRNA, required for the assembly of 30S particles and may also be responsible for determining the conformation of the 16S rRNA at the A site. The polypeptide is Small ribosomal subunit protein uS14 (Pasteurella multocida (strain Pm70)).